A 20-amino-acid polypeptide reads, in one-letter code: 54 kDa cell wall protein (20 aa).

Positions 1–20 (KVPVDDQFRRVNNGGATDTR) are disordered.

Its subcellular location is the secreted. It localises to the cell wall. The sequence is that of 54 kDa cell wall protein from Arabidopsis thaliana (Mouse-ear cress).